The sequence spans 478 residues: UDP-N-acetylmuramate--L-alanine ligase (478 aa).

125 to 131 (GTHGKTT) contacts ATP.

This sequence belongs to the MurCDEF family.

Its subcellular location is the cytoplasm. It catalyses the reaction UDP-N-acetyl-alpha-D-muramate + L-alanine + ATP = UDP-N-acetyl-alpha-D-muramoyl-L-alanine + ADP + phosphate + H(+). It participates in cell wall biogenesis; peptidoglycan biosynthesis. Functionally, cell wall formation. This Dichelobacter nodosus (strain VCS1703A) protein is UDP-N-acetylmuramate--L-alanine ligase.